Reading from the N-terminus, the 693-residue chain is Triadin (693 aa).

Over 1–47 (MTEITAEGNASTTTTVIDNKNGCIPKSPGKVLKRSVTEDIVTTFSSP) the chain is Cytoplasmic. A helical transmembrane segment spans residues 48-68 (AAWLLVIALIITWSAVAIVMF). At 69 to 693 (DLVDYKNFSA…NSPGQKQQEQ (625 aa)) the chain is on the lumenal side. The segment covering 117 to 130 (EGDEDDEDADEDID) has biased composition (acidic residues). 3 disordered regions span residues 117–260 (EGDE…AVHE), 278–649 (GDLK…QTRP), and 666–693 (FQFPVTPVQQPGENPGKTNSPGQKQQEQ). Basic and acidic residues-rich tracts occupy residues 131-241 (KGEI…KETP) and 249-260 (KKDDKEMPAVHE). S301 bears the Phosphoserine mark. Positions 305–352 (LEEKEKEEKKKMEKKDTSDTKKKEKEVKKKSEETTIDGKGKEPGKPPE) are enriched in basic and acidic residues. Positions 354–364 (KQMTAKLTTQA) are enriched in polar residues. 2 stretches are compositionally biased toward basic and acidic residues: residues 366-427 (ARKD…KEEI) and 438-502 (GKKE…KEAK). A glycan (N-linked (GlcNAc...) asparagine) is linked at N515. Basic and acidic residues-rich tracts occupy residues 526-547 (VKPEKAEHQEKGHPSIKKDKPK) and 558-579 (DSGKKKIEKSEKESKVPTREEN). Residue N584 is glycosylated (N-linked (GlcNAc...) asparagine). Basic and acidic residues predominate over residues 587–637 (KAEKPGKIPKDSKEAPASKKDKEDSKEAPTSKKDKEDSKDVPHSKKDKEVT). The span at 672-693 (PVQQPGENPGKTNSPGQKQQEQ) shows a compositional bias: polar residues.

Homooligomer of variable subunit number; disulfide-linked. Interacts with CASQ1 and RYR1 in skeletal muscle. Interacts with CASQ2. Phosphorylated by CaMK2. Post-translationally, N-glycosylated. As to expression, detected in heart (at protein level). Detected in heart.

Its subcellular location is the sarcoplasmic reticulum membrane. Contributes to the regulation of lumenal Ca2+ release via the sarcoplasmic reticulum calcium release channels RYR1 and RYR2, a key step in triggering skeletal and heart muscle contraction. Required for normal organization of the triad junction, where T-tubules and the sarcoplasmic reticulum terminal cisternae are in close contact. Required for normal skeletal muscle strength. Plays a role in excitation-contraction coupling in the heart and in regulating the rate of heart beats. This Mus musculus (Mouse) protein is Triadin.